Consider the following 357-residue polypeptide: Tetraacyldisaccharide 4'-kinase (357 aa).

Residue serine 67–threonine 74 participates in ATP binding.

This sequence belongs to the LpxK family.

The catalysed reaction is a lipid A disaccharide + ATP = a lipid IVA + ADP + H(+). Its pathway is glycolipid biosynthesis; lipid IV(A) biosynthesis; lipid IV(A) from (3R)-3-hydroxytetradecanoyl-[acyl-carrier-protein] and UDP-N-acetyl-alpha-D-glucosamine: step 6/6. In terms of biological role, transfers the gamma-phosphate of ATP to the 4'-position of a tetraacyldisaccharide 1-phosphate intermediate (termed DS-1-P) to form tetraacyldisaccharide 1,4'-bis-phosphate (lipid IVA). The polypeptide is Tetraacyldisaccharide 4'-kinase (Syntrophotalea carbinolica (strain DSM 2380 / NBRC 103641 / GraBd1) (Pelobacter carbinolicus)).